Consider the following 168-residue polypeptide: Ribosome maturation factor RimM (168 aa).

Residues 94–167 (DGNYYHHQII…KVIIELLDGL (74 aa)) form the PRC barrel domain.

Belongs to the RimM family. Binds ribosomal protein uS19.

The protein localises to the cytoplasm. Functionally, an accessory protein needed during the final step in the assembly of 30S ribosomal subunit, possibly for assembly of the head region. Essential for efficient processing of 16S rRNA. May be needed both before and after RbfA during the maturation of 16S rRNA. It has affinity for free ribosomal 30S subunits but not for 70S ribosomes. This Ligilactobacillus salivarius (strain UCC118) (Lactobacillus salivarius) protein is Ribosome maturation factor RimM.